Reading from the N-terminus, the 248-residue chain is PF03932 family protein CutC (248 aa).

This sequence belongs to the CutC family. In terms of assembly, homodimer.

It is found in the cytoplasm. The chain is PF03932 family protein CutC from Salmonella paratyphi A (strain AKU_12601).